Here is a 105-residue protein sequence, read N- to C-terminus: Large ribosomal subunit protein bL21c (105 aa).

Belongs to the bacterial ribosomal protein bL21 family. In terms of assembly, part of the 50S ribosomal subunit.

The protein resides in the plastid. It is found in the chloroplast. Its function is as follows. This protein binds to 23S rRNA. This chain is Large ribosomal subunit protein bL21c, found in Thalassiosira pseudonana (Marine diatom).